The chain runs to 60 residues: MSAIAPITGTIRKRILADITIGFAIGGAMASYWWWGFHKNIINKREAYYAKLAEQKAAEN.

Over 1–15 (MSAIAPITGTIRKRI) the chain is Mitochondrial matrix. The helical transmembrane segment at 16–38 (LADITIGFAIGGAMASYWWWGFH) threads the bilayer. The Mitochondrial intermembrane segment spans residues 39 to 57 (KNIINKREAYYAKLAEQKA). A propeptide spans 58–60 (AEN) (removed in mature form).

Belongs to the fungal cytochrome c oxidase subunit 7a family. In terms of assembly, component of the cytochrome c oxidase (complex IV, CIV), a multisubunit enzyme composed of a catalytic core of 3 subunits and several supernumerary subunits. The complex exists as a monomer or a dimer and forms supercomplexes (SCs) in the inner mitochondrial membrane with ubiquinol-cytochrome c oxidoreductase (cytochrome b-c1 complex, complex III, CIII).

Its subcellular location is the mitochondrion inner membrane. Its pathway is energy metabolism; oxidative phosphorylation. In terms of biological role, component of the cytochrome c oxidase, the last enzyme in the mitochondrial electron transport chain which drives oxidative phosphorylation. The respiratory chain contains 3 multisubunit complexes succinate dehydrogenase (complex II, CII), ubiquinol-cytochrome c oxidoreductase (cytochrome b-c1 complex, complex III, CIII) and cytochrome c oxidase (complex IV, CIV), that cooperate to transfer electrons derived from NADH and succinate to molecular oxygen, creating an electrochemical gradient over the inner membrane that drives transmembrane transport and the ATP synthase. Cytochrome c oxidase is the component of the respiratory chain that catalyzes the reduction of oxygen to water. Electrons originating from reduced cytochrome c in the intermembrane space (IMS) are transferred via the dinuclear copper A center (CU(A)) of subunit 2 and heme A of subunit 1 to the active site in subunit 1, a binuclear center (BNC) formed by heme A3 and copper B (CU(B)). The BNC reduces molecular oxygen to 2 water molecules using 4 electrons from cytochrome c in the IMS and 4 protons from the mitochondrial matrix. The chain is Cytochrome c oxidase subunit 9, mitochondrial (COX9) from Kluyveromyces lactis (strain ATCC 8585 / CBS 2359 / DSM 70799 / NBRC 1267 / NRRL Y-1140 / WM37) (Yeast).